A 202-amino-acid polypeptide reads, in one-letter code: MNFLRKIVKNCRDEDTQKPSPVSAPLDDDDLWLPPPEYVPLKELTSKKNMRNFCINGGVKVCSPNGYSFRILRHILKSFDEIYSGNHRMIGLVKVVIGLALSGSPVPEGMNWVYKLRRTFIFQWADSRGPLEGEELEYSQEITWDDDTEFVGLQIRVIAKQCHIQGRIWCINMNPRACQLWSDMSLQTQRSEEDKDSSLLLE.

A PPXY motif motif is present at residues 35–38 (PPEY). The tract at residues 115-151 (KLRRTFIFQWADSRGPLEGEELEYSQEITWDDDTEFV) is essential for glycoprotein binding.

It belongs to the lyssavirus matrix protein family. In terms of assembly, homomultimer. Interacts with nucleoprotein and with the cytoplasmic domain of glycoprotein. Interacts with host ATP6V1A; this interaction plays an important role in virion uncoating after viral entry.

It localises to the virion membrane. The protein resides in the host endomembrane system. The protein localises to the host cytoplasm. Plays a major role in assembly, budding and uncoating of virion after membrane fusion. Completely covers the ribonucleoprotein coil and keep it in condensed bullet-shaped form. Inhibits viral transcription and stimulates replication. Plays a major role in early induction of TRAIL-mediated apoptosis in infected neurons. Inhibits the integrated stress response (ISR) in the infected cell by blocking the formation of stress granules. The sequence is that of Matrix protein (M) from Rabies virus (strain ERA) (RABV).